The sequence spans 342 residues: Guanine nucleotide-binding protein alpha-9 subunit (342 aa).

A lipid anchor (N-myristoyl glycine) is attached at Gly2. Cys3 carries the S-palmitoyl cysteine lipid modification. In terms of domain architecture, G-alpha spans Arg28–Tyr342. Residues Lys31 to Thr44 are G1 motif. GTP-binding positions include Gly36–Ser43, Leu167–Thr173, Asp192–Gln196, Asn261–Asp264, and Ala316. Residues Ser43 and Thr173 each coordinate Mg(2+). A G2 motif region spans residues Asp165–Thr173. The segment at Phe188–Lys197 is G3 motif. The tract at residues Val257–Asp264 is G4 motif. The segment at Thr314–Thr319 is G5 motif.

Belongs to the G-alpha family. G proteins are composed of 3 units; alpha, beta and gamma. The alpha chain contains the guanine nucleotide binding site.

In terms of biological role, guanine nucleotide-binding proteins (G proteins) are involved as modulators or transducers in various transmembrane signaling systems. G alpha-9 antagonizes broad chemotactic response. It functions rapidly following receptor stimulation to negatively regulate PI3K/PTEN, adenylyl cyclase, and guanylyl cyclase pathways. In Dictyostelium discoideum (Social amoeba), this protein is Guanine nucleotide-binding protein alpha-9 subunit (gpaI).